A 302-amino-acid chain; its full sequence is Urease accessory protein UreD 1 (302 aa).

The protein belongs to the UreD family. As to quaternary structure, ureD, UreF and UreG form a complex that acts as a GTP-hydrolysis-dependent molecular chaperone, activating the urease apoprotein by helping to assemble the nickel containing metallocenter of UreC. The UreE protein probably delivers the nickel.

It is found in the cytoplasm. In terms of biological role, required for maturation of urease via the functional incorporation of the urease nickel metallocenter. This Psychrobacter cryohalolentis (strain ATCC BAA-1226 / DSM 17306 / VKM B-2378 / K5) protein is Urease accessory protein UreD 1.